The following is a 121-amino-acid chain: Small ribosomal subunit protein uS13 (121 aa).

A disordered region spans residues 97–121 (VRGQRTRTNARTRRGARKTVAGKKK). Residues 100 to 121 (QRTRTNARTRRGARKTVAGKKK) are compositionally biased toward basic residues.

It belongs to the universal ribosomal protein uS13 family. Part of the 30S ribosomal subunit. Forms a loose heterodimer with protein S19. Forms two bridges to the 50S subunit in the 70S ribosome.

Its function is as follows. Located at the top of the head of the 30S subunit, it contacts several helices of the 16S rRNA. In the 70S ribosome it contacts the 23S rRNA (bridge B1a) and protein L5 of the 50S subunit (bridge B1b), connecting the 2 subunits; these bridges are implicated in subunit movement. Contacts the tRNAs in the A and P-sites. The sequence is that of Small ribosomal subunit protein uS13 from Prochlorococcus marinus (strain MIT 9313).